A 677-amino-acid polypeptide reads, in one-letter code: DNA ligase (677 aa).

NAD(+) is bound by residues 43–47, 92–93, and Glu122; these read DHVYD and SM. The N6-AMP-lysine intermediate role is filled by Lys124. NAD(+)-binding residues include Arg145, Glu179, Lys295, and Lys319. Residues Cys413, Cys416, Cys431, and Cys436 each coordinate Zn(2+). Residues 599 to 677 form the BRCT domain; it reads TSDSYFNGKT…EADLDNYLAQ (79 aa).

Belongs to the NAD-dependent DNA ligase family. LigA subfamily. The cofactor is Mg(2+). Mn(2+) is required as a cofactor.

It catalyses the reaction NAD(+) + (deoxyribonucleotide)n-3'-hydroxyl + 5'-phospho-(deoxyribonucleotide)m = (deoxyribonucleotide)n+m + AMP + beta-nicotinamide D-nucleotide.. DNA ligase that catalyzes the formation of phosphodiester linkages between 5'-phosphoryl and 3'-hydroxyl groups in double-stranded DNA using NAD as a coenzyme and as the energy source for the reaction. It is essential for DNA replication and repair of damaged DNA. This chain is DNA ligase, found in Latilactobacillus sakei subsp. sakei (strain 23K) (Lactobacillus sakei subsp. sakei).